The following is a 75-amino-acid chain: Small ribosomal subunit protein bS18 (75 aa).

It belongs to the bacterial ribosomal protein bS18 family. In terms of assembly, part of the 30S ribosomal subunit. Forms a tight heterodimer with protein bS6.

Its function is as follows. Binds as a heterodimer with protein bS6 to the central domain of the 16S rRNA, where it helps stabilize the platform of the 30S subunit. This Histophilus somni (strain 129Pt) (Haemophilus somnus) protein is Small ribosomal subunit protein bS18.